A 1093-amino-acid chain; its full sequence is Mediator of RNA polymerase II transcription subunit 14 (1093 aa).

Disordered regions lie at residues methionine 1–histidine 62 and glutamate 1034–threonine 1065. Positions aspartate 19 to asparagine 31 are enriched in polar residues. The span at lysine 41–histidine 62 shows a compositional bias: basic and acidic residues. The segment covering aspartate 1040 to proline 1056 has biased composition (polar residues).

The protein belongs to the Mediator complex subunit 14 family. As to quaternary structure, component of the Mediator complex.

The protein localises to the nucleus. Functionally, component of the Mediator complex, a coactivator involved in the regulated transcription of nearly all RNA polymerase II-dependent genes. Mediator functions as a bridge to convey information from gene-specific regulatory proteins to the basal RNA polymerase II transcription machinery. Mediator is recruited to promoters by direct interactions with regulatory proteins and serves as a scaffold for the assembly of a functional preinitiation complex with RNA polymerase II and the general transcription factors. This Aspergillus fumigatus (strain ATCC MYA-4609 / CBS 101355 / FGSC A1100 / Af293) (Neosartorya fumigata) protein is Mediator of RNA polymerase II transcription subunit 14 (rgr1).